The sequence spans 309 residues: Protein FdhE (309 aa).

The protein belongs to the FdhE family.

The protein localises to the cytoplasm. Functionally, necessary for formate dehydrogenase activity. The protein is Protein FdhE of Salmonella dublin (strain CT_02021853).